Here is a 107-residue protein sequence, read N- to C-terminus: Pathogenesis-related protein PR-4 (107 aa).

In terms of domain architecture, Barwin spans Gln1–Asp107. Disulfide bonds link Cys14/Cys46, Cys35/Cys69, and Cys49/Cys105.

Preferentially expressed in the tissue surrounding the abscission zone of fruitlets.

Its subcellular location is the secreted. It is found in the cell wall. In terms of biological role, may be involved in protecting plant tissues from pathogen infection. This Prunus persica (Peach) protein is Pathogenesis-related protein PR-4.